A 417-amino-acid chain; its full sequence is Gamma-glutamyl phosphate reductase (417 aa).

The protein belongs to the gamma-glutamyl phosphate reductase family.

It localises to the cytoplasm. It catalyses the reaction L-glutamate 5-semialdehyde + phosphate + NADP(+) = L-glutamyl 5-phosphate + NADPH + H(+). It participates in amino-acid biosynthesis; L-proline biosynthesis; L-glutamate 5-semialdehyde from L-glutamate: step 2/2. Catalyzes the NADPH-dependent reduction of L-glutamate 5-phosphate into L-glutamate 5-semialdehyde and phosphate. The product spontaneously undergoes cyclization to form 1-pyrroline-5-carboxylate. The protein is Gamma-glutamyl phosphate reductase of Legionella pneumophila (strain Corby).